We begin with the raw amino-acid sequence, 382 residues long: Anhydro-N-acetylmuramic acid kinase (382 aa).

18–25 (GTSLDGVD) is an ATP binding site.

The protein belongs to the anhydro-N-acetylmuramic acid kinase family.

The enzyme catalyses 1,6-anhydro-N-acetyl-beta-muramate + ATP + H2O = N-acetyl-D-muramate 6-phosphate + ADP + H(+). It participates in amino-sugar metabolism; 1,6-anhydro-N-acetylmuramate degradation. Its pathway is cell wall biogenesis; peptidoglycan recycling. Catalyzes the specific phosphorylation of 1,6-anhydro-N-acetylmuramic acid (anhMurNAc) with the simultaneous cleavage of the 1,6-anhydro ring, generating MurNAc-6-P. Is required for the utilization of anhMurNAc either imported from the medium or derived from its own cell wall murein, and thus plays a role in cell wall recycling. This chain is Anhydro-N-acetylmuramic acid kinase, found in Ralstonia nicotianae (strain ATCC BAA-1114 / GMI1000) (Ralstonia solanacearum).